A 367-amino-acid polypeptide reads, in one-letter code: Polygalacturonase (367 aa).

An N-terminal signal peptide occupies residues 1-18 (MRTSFVTMLALGAAAVSA). A disulfide bond links C34 and C49. 5 PbH1 repeats span residues 161 to 191 (ADRL…DVGS), 192 to 213 (STFI…AINS), 214 to 234 (GSNI…SIGS), 243 to 264 (VKDV…RVKT), and 272 to 294 (VSGV…VIEQ). The active-site Proton donor is D206. Residues C208 and C224 are joined by a disulfide bond. The active site involves H228. N-linked (GlcNAc...) asparagine glycans are attached at residues N318 and N336. Disulfide bonds link C334–C339 and C358–C367.

It belongs to the glycosyl hydrolase 28 family.

It is found in the secreted. The catalysed reaction is (1,4-alpha-D-galacturonosyl)n+m + H2O = (1,4-alpha-D-galacturonosyl)n + (1,4-alpha-D-galacturonosyl)m.. This chain is Polygalacturonase (PG1), found in Penicillium digitatum (Green mold).